An 81-amino-acid chain; its full sequence is Photosystem I iron-sulfur center (81 aa).

2 4Fe-4S ferredoxin-type domains span residues 2–31 (AHSV…MVPW) and 39–68 (IASA…VRVY). Residues cysteine 11, cysteine 14, cysteine 17, cysteine 21, cysteine 48, cysteine 51, cysteine 54, and cysteine 58 each coordinate [4Fe-4S] cluster.

The eukaryotic PSI reaction center is composed of at least 11 subunits. [4Fe-4S] cluster is required as a cofactor.

The protein localises to the plastid. The protein resides in the chloroplast thylakoid membrane. It carries out the reaction reduced [plastocyanin] + hnu + oxidized [2Fe-2S]-[ferredoxin] = oxidized [plastocyanin] + reduced [2Fe-2S]-[ferredoxin]. Functionally, apoprotein for the two 4Fe-4S centers FA and FB of photosystem I (PSI); essential for photochemical activity. FB is the terminal electron acceptor of PSI, donating electrons to ferredoxin. The C-terminus interacts with PsaA/B/D and helps assemble the protein into the PSI complex. Required for binding of PsaD and PsaE to PSI. PSI is a plastocyanin-ferredoxin oxidoreductase, converting photonic excitation into a charge separation, which transfers an electron from the donor P700 chlorophyll pair to the spectroscopically characterized acceptors A0, A1, FX, FA and FB in turn. The polypeptide is Photosystem I iron-sulfur center (Chlorokybus atmophyticus (Soil alga)).